The following is a 187-amino-acid chain: Small ribosomal subunit protein uS5 (187 aa).

In terms of domain architecture, S5 DRBM spans 21–84 (MVDKLVHINR…ESAKRDMIFV (64 aa)).

It belongs to the universal ribosomal protein uS5 family. In terms of assembly, part of the 30S ribosomal subunit. Contacts proteins S4 and S8.

Its function is as follows. With S4 and S12 plays an important role in translational accuracy. In terms of biological role, located at the back of the 30S subunit body where it stabilizes the conformation of the head with respect to the body. The protein is Small ribosomal subunit protein uS5 of Mesorhizobium japonicum (strain LMG 29417 / CECT 9101 / MAFF 303099) (Mesorhizobium loti (strain MAFF 303099)).